Here is a 196-residue protein sequence, read N- to C-terminus: Probable nicotinate-nucleotide adenylyltransferase (196 aa).

It belongs to the NadD family.

It carries out the reaction nicotinate beta-D-ribonucleotide + ATP + H(+) = deamido-NAD(+) + diphosphate. Its pathway is cofactor biosynthesis; NAD(+) biosynthesis; deamido-NAD(+) from nicotinate D-ribonucleotide: step 1/1. Its function is as follows. Catalyzes the reversible adenylation of nicotinate mononucleotide (NaMN) to nicotinic acid adenine dinucleotide (NaAD). This is Probable nicotinate-nucleotide adenylyltransferase from Thermotoga petrophila (strain ATCC BAA-488 / DSM 13995 / JCM 10881 / RKU-1).